A 103-amino-acid chain; its full sequence is Large ribosomal subunit protein bL21 (103 aa).

The protein belongs to the bacterial ribosomal protein bL21 family. Part of the 50S ribosomal subunit. Contacts protein L20.

This protein binds to 23S rRNA in the presence of protein L20. This Sodalis glossinidius (strain morsitans) protein is Large ribosomal subunit protein bL21.